Consider the following 160-residue polypeptide: Large ribosomal subunit protein uL11 (160 aa).

Belongs to the universal ribosomal protein uL11 family. As to quaternary structure, part of the ribosomal stalk of the 50S ribosomal subunit. Interacts with L10 and the large rRNA to form the base of the stalk. L10 forms an elongated spine to which L12 dimers bind in a sequential fashion forming a multimeric L10(L12)X complex.

In terms of biological role, forms part of the ribosomal stalk which helps the ribosome interact with GTP-bound translation factors. This Methanothermobacter thermautotrophicus (strain ATCC 29096 / DSM 1053 / JCM 10044 / NBRC 100330 / Delta H) (Methanobacterium thermoautotrophicum) protein is Large ribosomal subunit protein uL11.